The following is a 259-amino-acid chain: Phosphatidylglycerol--prolipoprotein diacylglyceryl transferase (259 aa).

4 helical membrane passes run 12 to 32, 46 to 66, 83 to 103, and 109 to 129; these read LSLHWYAVCILVGLLLAVYLA, IIDFILIAFPLAIIGARIYYV, IWNGGIAIYGGLITGTIVLFV, and VLNPIHFLDIAAPSVMLAQAI. Residue R131 participates in a 1,2-diacyl-sn-glycero-3-phospho-(1'-sn-glycerol) binding. 3 helical membrane passes run 167–187, 194–214, and 226–246; these read VPTFLYESMWNLIGFVIIMVW, LLDGDILSFYLIWYGCGRLVI, and GIRVSQYVSVLLIVIAIVFIF.

Belongs to the Lgt family.

The protein localises to the cell membrane. The enzyme catalyses L-cysteinyl-[prolipoprotein] + a 1,2-diacyl-sn-glycero-3-phospho-(1'-sn-glycerol) = an S-1,2-diacyl-sn-glyceryl-L-cysteinyl-[prolipoprotein] + sn-glycerol 1-phosphate + H(+). It participates in protein modification; lipoprotein biosynthesis (diacylglyceryl transfer). Catalyzes the transfer of the diacylglyceryl group from phosphatidylglycerol to the sulfhydryl group of the N-terminal cysteine of a prolipoprotein, the first step in the formation of mature lipoproteins. This Streptococcus equi subsp. zooepidemicus (strain MGCS10565) protein is Phosphatidylglycerol--prolipoprotein diacylglyceryl transferase.